We begin with the raw amino-acid sequence, 403 residues long: Esterase LipC (403 aa).

Catalysis depends on residues S237, D334, and H367.

This sequence belongs to the 'GDXG' lipolytic enzyme family.

It is found in the cell surface. Its subcellular location is the secreted. The protein localises to the cell wall. The protein resides in the capsule. It carries out the reaction a fatty acid ester + H2O = an aliphatic alcohol + a fatty acid + H(+). It catalyses the reaction a butanoate ester + H2O = an aliphatic alcohol + butanoate + H(+). The enzyme catalyses a hexanoate ester + H2O = an aliphatic alcohol + hexanoate + H(+). The catalysed reaction is an acetyl ester + H2O = an aliphatic alcohol + acetate + H(+). It carries out the reaction an octanoate ester + H2O = an aliphatic alcohol + octanoate + H(+). It catalyses the reaction decanoate ester + H2O = decanoate + an aliphatic alcohol + H(+). Esterase that can hydrolyze short-chain esters with the carbon chain containing 2 to 10 carbon atoms. Does not have lipase activity. Is highly immunogenic and elicits strong humoral immune responses in both HIV-negative (HIV-) and HIV-positive (HIV+) tuberculosis (TB) patients. Also elicits pro-inflammatory cytokine and chemokine responses from macrophages and pulmonary epithelial cells. May participate in the progression of active tuberculosis both by contributing to the utilization of lipid substrates for bacterial growth and replication, and by modulating immune responses. The polypeptide is Esterase LipC (Mycobacterium tuberculosis (strain ATCC 25618 / H37Rv)).